Consider the following 278-residue polypeptide: Orotidine 5'-phosphate decarboxylase (278 aa).

Catalysis depends on Lys95, which acts as the Proton donor.

Belongs to the OMP decarboxylase family. Type 2 subfamily.

It catalyses the reaction orotidine 5'-phosphate + H(+) = UMP + CO2. Its pathway is pyrimidine metabolism; UMP biosynthesis via de novo pathway; UMP from orotate: step 2/2. This chain is Orotidine 5'-phosphate decarboxylase, found in Corynebacterium glutamicum (strain ATCC 13032 / DSM 20300 / JCM 1318 / BCRC 11384 / CCUG 27702 / LMG 3730 / NBRC 12168 / NCIMB 10025 / NRRL B-2784 / 534).